Reading from the N-terminus, the 214-residue chain is Large ribosomal subunit protein uL16 (214 aa).

R32 carries the post-translational modification Citrulline. K175 is covalently cross-linked (Glycyl lysine isopeptide (Lys-Gly) (interchain with G-Cter in SUMO2)). Residue K188 forms a Glycyl lysine isopeptide (Lys-Gly) (interchain with G-Cter in ubiquitin) linkage.

It belongs to the universal ribosomal protein uL16 family. In terms of assembly, component of the large ribosomal subunit. Mature ribosomes consist of a small (40S) and a large (60S) subunit. The 40S subunit contains about 33 different proteins and 1 molecule of RNA (18S). The 60S subunit contains about 49 different proteins and 3 molecules of RNA (28S, 5.8S and 5S). Citrullinated by PADI4. Post-translationally, ufmylated by UFL1.

It is found in the cytoplasm. Component of the large ribosomal subunit. Plays a role in the formation of actively translating ribosomes. May play a role in the embryonic brain development. This Oryctolagus cuniculus (Rabbit) protein is Large ribosomal subunit protein uL16 (RPL10).